The chain runs to 31 residues: Photosystem II reaction center protein T (31 aa).

The helical transmembrane segment at 3–23 (SVAYILVLTMTLAVLFFAIAF) threads the bilayer.

Belongs to the PsbT family. PSII is composed of 1 copy each of membrane proteins PsbA, PsbB, PsbC, PsbD, PsbE, PsbF, PsbH, PsbI, PsbJ, PsbK, PsbL, PsbM, PsbT, PsbX, PsbY, PsbZ, Psb30/Ycf12, peripheral proteins PsbO, CyanoQ (PsbQ), PsbU, PsbV and a large number of cofactors. It forms dimeric complexes.

The protein resides in the cellular thylakoid membrane. Functionally, found at the monomer-monomer interface of the photosystem II (PS II) dimer, plays a role in assembly and dimerization of PSII. PSII is a light-driven water plastoquinone oxidoreductase, using light energy to abstract electrons from H(2)O, generating a proton gradient subsequently used for ATP formation. In Rippkaea orientalis (strain PCC 8801 / RF-1) (Cyanothece sp. (strain PCC 8801)), this protein is Photosystem II reaction center protein T.